Consider the following 421-residue polypeptide: Accessory Sec system protein translocase subunit SecY2 (421 aa).

Transmembrane regions (helical) follow at residues 17-37, 69-89, 102-122, 139-159, 165-185, 204-224, 254-274, 299-319, 358-378, and 383-403; these read LWTSLIVFIFLIGRNILIPGV, FALGLGPWMSATILWRVLTLI, TFLFKIAIAIIIGFIQSIAII, FGAMATISLIMVSGAVFLVWL, ILGIGGPTVLILASMIINWPT, VILMLVIMISIVFLVLLTVVV, PAGGMPLMYSMTLLVLPQYIL, PLGVTAYIIILFALSIGFAFI, SFVGALYMSLIAGFPLYFGII, and TQYALTAGSIIILVNLVINII.

It belongs to the SecY/SEC61-alpha family. SecY2 subfamily. In terms of assembly, component of the accessory SecA2/SecY2 protein translocase complex required to export cell wall proteins. May form heterotrimers with SecE and SecG subunits.

The protein resides in the cell membrane. In terms of biological role, part of the accessory SecA2/SecY2 system specifically required for export of possible cell wall proteins. The central subunit of a protein translocation channel. The polypeptide is Accessory Sec system protein translocase subunit SecY2 (Leuconostoc gelidum subsp. gasicomitatum (strain DSM 15947 / CCUG 46042 / CECT 5767 / JCM 12535 / LMG 18811 / NBRC 113245 / TB1-10) (Leuconostoc gasicomitatum)).